The following is a 261-amino-acid chain: DNA repair protein RecO (261 aa).

This sequence belongs to the RecO family.

Involved in DNA repair and RecF pathway recombination. The sequence is that of DNA repair protein RecO from Limosilactobacillus reuteri (strain DSM 20016) (Lactobacillus reuteri).